Reading from the N-terminus, the 87-residue chain is Small ribosomal subunit protein uS15 (87 aa).

The span at 1 to 19 (MEKARKEQLIREYATHEGD) shows a compositional bias: basic and acidic residues. Positions 1-22 (MEKARKEQLIREYATHEGDTGS) are disordered.

Belongs to the universal ribosomal protein uS15 family. In terms of assembly, part of the 30S ribosomal subunit. Forms a bridge to the 50S subunit in the 70S ribosome, contacting the 23S rRNA.

One of the primary rRNA binding proteins, it binds directly to 16S rRNA where it helps nucleate assembly of the platform of the 30S subunit by binding and bridging several RNA helices of the 16S rRNA. Functionally, forms an intersubunit bridge (bridge B4) with the 23S rRNA of the 50S subunit in the ribosome. This Clostridium novyi (strain NT) protein is Small ribosomal subunit protein uS15.